A 367-amino-acid polypeptide reads, in one-letter code: Anhydro-N-acetylmuramic acid kinase (367 aa).

Position 10–17 (10–17 (GTSLDGVD)) interacts with ATP.

Belongs to the anhydro-N-acetylmuramic acid kinase family.

The catalysed reaction is 1,6-anhydro-N-acetyl-beta-muramate + ATP + H2O = N-acetyl-D-muramate 6-phosphate + ADP + H(+). It participates in amino-sugar metabolism; 1,6-anhydro-N-acetylmuramate degradation. The protein operates within cell wall biogenesis; peptidoglycan recycling. Catalyzes the specific phosphorylation of 1,6-anhydro-N-acetylmuramic acid (anhMurNAc) with the simultaneous cleavage of the 1,6-anhydro ring, generating MurNAc-6-P. Is required for the utilization of anhMurNAc either imported from the medium or derived from its own cell wall murein, and thus plays a role in cell wall recycling. In Aliivibrio fischeri (strain ATCC 700601 / ES114) (Vibrio fischeri), this protein is Anhydro-N-acetylmuramic acid kinase.